The sequence spans 413 residues: Enhanced ethylene response protein 5 (413 aa).

The PCI domain occupies 216–402 (VTYMYYTGRL…KVVVLSKQDP (187 aa)).

As to quaternary structure, interacts with EIN2 (via C-terminus). May also interact weakly with CSN8. Interacts with DSS1(V), AMPD, SAC3A, SAC3B and At5g61290 (AC Q9FLK4). Interacts with UCH1 and UCH2. Interacts with NUP1, anchoring the TREX-2 complex on the nuclear pore complex. As to expression, expressed at low levels in roots, leaves, stems and shoots. Detected in seedlings, roots, leaves and anthers.

It localises to the nucleus. Its function is as follows. Involved in the regulation of ethylene response. Probable TREX-2 component required for nuclear RNA export. The TREX-2 complex (transcription and export complex 2) functions in docking export-competent ribonucleoprotein particles (mRNPs) to the nuclear entrance of the nuclear pore complex (nuclear basket). TREX-2 participates in mRNA export and accurate chromatin positioning in the nucleus by tethering genes to the nuclear periphery. The protein is Enhanced ethylene response protein 5 of Arabidopsis thaliana (Mouse-ear cress).